The primary structure comprises 292 residues: Ferric aerobactin-binding protein VatD (292 aa).

A signal peptide spans 1 to 12; the sequence is MLSAALAFNSYA. Residues 30-292 enclose the Fe/B12 periplasmic-binding domain; it reads KVVALDWVLT…HITGRLTQPQ (263 aa). Desferrioxamine B is bound by residues Trp-61, Arg-77, Tyr-118, Arg-185, Trp-213, Phe-215, Trp-269, and Phe-271.

The protein belongs to the bacterial solute-binding protein 8 family. The complex is composed of two ATP-binding proteins (VatC), two transmembrane proteins (VatB) and a solute-binding protein (VatD).

The protein resides in the periplasm. Functionally, part of the ABC transporter complex VatCDB involved in the import of iron(3+)-complexed aerobactin, a citrate-hydroxamate siderophore produced by other bacteria. Binds the iron(3+)-aerobactin complex and transfers it to the membrane-bound permease. Functions in the import of iron(3+)-complexed vulnibactin, a catecholate siderophore synthesized by V.vulnificus, in the absence of FatB. This Vibrio vulnificus protein is Ferric aerobactin-binding protein VatD.